We begin with the raw amino-acid sequence, 124 residues long: Schlafen-like protein (124 aa).

The protein belongs to the Schlafen family. Subgroup poxviridae B3 subfamily.

This chain is Schlafen-like protein, found in Homo sapiens (Human).